The primary structure comprises 79 residues: UPF0150 protein ssr1765 (79 aa).

It belongs to the UPF0150 family.

The sequence is that of UPF0150 protein ssr1765 from Synechocystis sp. (strain ATCC 27184 / PCC 6803 / Kazusa).